We begin with the raw amino-acid sequence, 136 residues long: Putative pre-16S rRNA nuclease (136 aa).

Belongs to the YqgF nuclease family.

The protein localises to the cytoplasm. Functionally, could be a nuclease involved in processing of the 5'-end of pre-16S rRNA. This is Putative pre-16S rRNA nuclease from Francisella philomiragia subsp. philomiragia (strain ATCC 25017 / CCUG 19701 / FSC 153 / O#319-036).